The following is a 189-amino-acid chain: WASH complex subunit homolog 3 (189 aa).

The stretch at 35–74 forms a coiled coil; the sequence is MTEMLNNFGNKMEDILEKAEQSLDTADRKLRLMESKLAGM. Disordered stretches follow at residues 76–101 and 150–189; these read LEDKSTTATPSSAPEIDEIHESNPSS and SEGVDPSILKRGDEPSRPQAQTSRNYESSGESTASFSDSD. A compositionally biased stretch (basic and acidic residues) spans 150–165; the sequence is SEGVDPSILKRGDEPS. A compositionally biased stretch (polar residues) spans 167-189; sequence PQAQTSRNYESSGESTASFSDSD. Thr182 is subject to Phosphothreonine.

It belongs to the CCDC53 family. In terms of assembly, probable component of the WASH complex. Component of the DHIC (ddl-1-containing hsf-1 inhibitory complex), which contains at least ddl-1, ddl-2, hsb-1 and hsf-1. Within the complex, interacts with ddl-2. Within the complex, interacts with hsb-1. Within the complex, interacts with hsf-1. Formation of the DHIC may be dependent upon the Insulin/IGF-1-like signaling (IIS) mediated pathway. Post-translationally, phosphorylated. Phosphorylation on Thr-182 may promote DHIC complex dissociation and consequently the activation of heat-shock transcription factor hsf-1. Phosphorylation is modulated by the Insulin/IGF-1-like signaling (IIS) mediated pathway. Expressed in pharynx, intestine, body wall muscles, vulva muscles, spermatheca, and several head and tail neurons.

Functionally, acts as a component of the WASH core complex that functions as a nucleation-promoting factor (NPF) at the surface of endosomes, where it recruits and activates the Arp2/3 complex to induce actin polymerization, playing a key role in the fission of tubules that serve as transport intermediates during endosome sorting. Acts as a component of the DHIC (ddl-1-containing hsf-1 inhibitory complex) which modulates lifespan by sequestering the heat-shock transcription factor hsf-1 to negatively regulate its binding to DNA and its transcriptional activity. The polypeptide is WASH complex subunit homolog 3 (ddl-1) (Caenorhabditis elegans).